Here is a 450-residue protein sequence, read N- to C-terminus: Guanine deaminase (450 aa).

Positions 88 and 90 each coordinate Zn(2+). Residues 90–93 (HAPQ), 218–219 (RF), 245–248 (HLSE), and Asp335 contribute to the substrate site. Positions 245 and 335 each coordinate Zn(2+).

The protein belongs to the metallo-dependent hydrolases superfamily. ATZ/TRZ family. The cofactor is Zn(2+).

It carries out the reaction guanine + H2O + H(+) = xanthine + NH4(+). It participates in purine metabolism; guanine degradation; xanthine from guanine: step 1/1. In terms of biological role, catalyzes the hydrolytic deamination of guanine, producing xanthine and ammonia. The chain is Guanine deaminase (guaD) from Dictyostelium discoideum (Social amoeba).